A 515-amino-acid polypeptide reads, in one-letter code: RNA-splicing ligase RtcB homolog (515 aa).

Residues Asp-129, Cys-132, His-237, His-269, and His-363 each contribute to the Mn(2+) site. 236-240 (NHYAE) provides a ligand contact to GMP. Residues 363–364 (HN), 412–415 (GGTM), Ser-419, 438–441 (HGAG), and Lys-514 contribute to the GMP site. Residue His-438 is the GMP-histidine intermediate of the active site.

Belongs to the RtcB family. In terms of assembly, catalytic component of the tRNA-splicing ligase complex. The cofactor is Mn(2+).

The catalysed reaction is a 3'-end 3'-phospho-ribonucleotide-RNA + a 5'-end dephospho-ribonucleoside-RNA + GTP = a ribonucleotidyl-ribonucleotide-RNA + GMP + diphosphate. The enzyme catalyses a 3'-end 2',3'-cyclophospho-ribonucleotide-RNA + a 5'-end dephospho-ribonucleoside-RNA + GTP + H2O = a ribonucleotidyl-ribonucleotide-RNA + GMP + diphosphate + H(+). Catalytic subunit of the tRNA-splicing ligase complex that acts by directly joining spliced tRNA halves to mature-sized tRNAs by incorporating the precursor-derived splice junction phosphate into the mature tRNA as a canonical 3',5'-phosphodiester. May act as an RNA ligase with broad substrate specificity, and may function toward other RNAs. The chain is RNA-splicing ligase RtcB homolog from Ostreococcus tauri.